A 256-amino-acid chain; its full sequence is Flap endonuclease Xni (256 aa).

Asp-105 is a Mg(2+) binding site. The region spanning 164 to 250 (SQFIDFLAMA…LNTRLANFRV (87 aa)) is the 5'-3' exonuclease domain. Positions 172, 173, 181, 183, and 186 each coordinate K(+). The tract at residues 185-190 (GIGPKS) is interaction with DNA.

The protein belongs to the Xni family. The cofactor is Mg(2+). K(+) is required as a cofactor.

In terms of biological role, has flap endonuclease activity. During DNA replication, flap endonucleases cleave the 5'-overhanging flap structure that is generated by displacement synthesis when DNA polymerase encounters the 5'-end of a downstream Okazaki fragment. This Shewanella loihica (strain ATCC BAA-1088 / PV-4) protein is Flap endonuclease Xni.